A 344-amino-acid polypeptide reads, in one-letter code: Uroporphyrinogen decarboxylase (344 aa).

Substrate is bound by residues 23–27 (RQAGR), aspartate 73, tyrosine 149, threonine 204, and histidine 321.

The protein belongs to the uroporphyrinogen decarboxylase family. Homodimer.

Its subcellular location is the cytoplasm. It carries out the reaction uroporphyrinogen III + 4 H(+) = coproporphyrinogen III + 4 CO2. Its pathway is porphyrin-containing compound metabolism; protoporphyrin-IX biosynthesis; coproporphyrinogen-III from 5-aminolevulinate: step 4/4. In terms of biological role, catalyzes the decarboxylation of four acetate groups of uroporphyrinogen-III to yield coproporphyrinogen-III. This chain is Uroporphyrinogen decarboxylase, found in Francisella tularensis subsp. holarctica (strain LVS).